We begin with the raw amino-acid sequence, 362 residues long: 2-oxoglutarate-dependent dioxygenase lolO1 (362 aa).

In terms of domain architecture, Fe2OG dioxygenase spans 199–312 (TWNYFLGQPV…RYSLVFFGHL (114 aa)). The Fe cation site is built by His222, Asp224, and His280. Residue Arg303 coordinates 2-oxoglutarate.

It belongs to the iron/ascorbate-dependent oxidoreductase family. It depends on Fe(2+) as a cofactor.

It participates in alkaloid biosynthesis. Functionally, 2-oxoglutarate-dependent dioxygenase; part of the gene cluster that mediates the biosynthesis of loline alkaloids, potent insecticidal agents composed of a pyrrolizidine ring system and an uncommon ether bridge linking carbons 2 and 7. Lolines are structurally differentiated by the various modifications of the L-amino group and include norloline, loline, N-methylloline, N-acetylloline, N-acetylnorloline, and N-formylloline. The first committed step is the condensation of O-acetyl-L-homoserine (derived from L-aspartic acid) and L-proline, probably catalyzed by the gamma-type pyridoxal 5'-phosphate(PLP)-dependent enzyme lolC, to give the diamino diacid, NACPP. Ensuing cyclization, decarboxylation, and acetylation steps yield 1-exo-acetamidopyrrolizidine (AcAP). LolO is required for installation of the ether bridge upon the pathway intermediate, 1-exo-acetamidopyrrolizidine (AcAP). In sequential 2-oxoglutarate- and O(2)-consuming steps, lolO removes hydrogens from C2 and C7 of AcAP to form both carbon-oxygen bonds in N-acetylnorloline (NANL), the precursor to all other lolines. The enzymes lolD, lolE, lolF and lolT have also been proposed to be involved in the ether-bridge installation. Further processing of the exocyclic moiety of NANL by fungal N-acetamidase (LolN), methyltransferase (LolM), and cytochrome P450 (LolP) enzymes, with occasional involvement of a plant acetyltransferase, generates the other known lolines. LolN transforms NANL to norlonine which is monomethylated and dimethylated to respectively lonine and N-methyllonine (NML) by lolM. LolP catalyzes hydroxylation of the methyl group in N-methylloline (NML) and further oxygenation to N-formylloline (NFL). A plant acetyltransferase is responsible for the acetylation of loline to form N-acetylloline (NAL). LolA might interact with aspartate kinase to prevent feedback inhibition of its activity by these end products and thereby promote production of l-homoserine from l-aspartate. This Epichloe uncinata (Endophyte fungus) protein is 2-oxoglutarate-dependent dioxygenase lolO1.